We begin with the raw amino-acid sequence, 436 residues long: MNFQENLAALDLEYLWHPCSQMQEHQNFPIIPIKKAQGIYLYDFNDNAYMDLISSWWVNLFGHNNAYISQQLKNQIDDLEHVLLASFSHKPIITLSQRLCQLTHMDKCFYADNGSSCVEIALKMSYHAHFLKNQTRRKKLFLSLSNSYHGETLGALSVGDVKLYKDTYTPLLLKNLTTPVPKNDHEIENSLNALKRLLDKHSEEICAFIAEPLLQCAGNMHIYSARYLKQAVLLCKQKNIHIIFDEIATGFGRTGSMFAYEQCEIKPDFLCLSKGISGGYLPLSALLTHNEIYNQFYAPYEENKAFLHSHSYTGNALACACANATLDIFEKENVIEKNKALSGFIFNTLQNALKPLMEQQVVSDLRHLGMVFAFEVFIQTKERLSLAVFKKTLKKGLLLRPLNNTIYLMPPYIITHEEVKKAVAGLVEILDELRKG.

W56 contacts substrate. 114 to 115 contributes to the pyridoxal 5'-phosphate binding site; sequence GS. Y148 provides a ligand contact to substrate. D245 lines the pyridoxal 5'-phosphate pocket. Residues K274, S309, and R400 each coordinate substrate. Position 274 is an N6-(pyridoxal phosphate)lysine (K274).

This sequence belongs to the class-III pyridoxal-phosphate-dependent aminotransferase family. BioA subfamily. As to quaternary structure, homodimer. Requires pyridoxal 5'-phosphate as cofactor.

The protein resides in the cytoplasm. The enzyme catalyses (8S)-8-amino-7-oxononanoate + S-adenosyl-L-methionine = S-adenosyl-4-methylsulfanyl-2-oxobutanoate + (7R,8S)-7,8-diammoniononanoate. It functions in the pathway cofactor biosynthesis; biotin biosynthesis; 7,8-diaminononanoate from 8-amino-7-oxononanoate (SAM route): step 1/1. Catalyzes the transfer of the alpha-amino group from S-adenosyl-L-methionine (SAM) to 7-keto-8-aminopelargonic acid (KAPA) to form 7,8-diaminopelargonic acid (DAPA). It is the only aminotransferase known to utilize SAM as an amino donor. The protein is Adenosylmethionine-8-amino-7-oxononanoate aminotransferase of Helicobacter pylori (strain ATCC 700392 / 26695) (Campylobacter pylori).